Reading from the N-terminus, the 1057-residue chain is Carbamoyl phosphate synthase large chain (1057 aa).

The tract at residues 1–401 (MPKRQDIETI…SLLKAIRSLE (401 aa)) is carboxyphosphate synthetic domain. 12 residues coordinate ATP: Arg-129, Arg-169, Gly-175, Gly-176, Lys-208, Ile-210, Glu-215, Gly-241, Ile-242, His-243, Gln-284, and Glu-298. In terms of domain architecture, ATP-grasp 1 spans 133 to 327 (RTLMNDLGVP…IAKLAAKIAI (195 aa)). Mg(2+) is bound by residues Gln-284, Glu-298, and Asn-300. Residues Gln-284, Glu-298, and Asn-300 each contribute to the Mn(2+) site. Residues 402–546 (YGVHHLGLPN…YGTYEYENES (145 aa)) form an oligomerization domain region. Residues 547–929 (VVTEKEKILV…ALFKGLTASG (383 aa)) are carbamoyl phosphate synthetic domain. In terms of domain architecture, ATP-grasp 2 spans 671 to 861 (EALLHTIDVP…MAQLAMRAII (191 aa)). Positions 707, 746, 748, 752, 777, 778, 779, 780, 820, and 832 each coordinate ATP. Positions 820, 832, and 834 each coordinate Mg(2+). 3 residues coordinate Mn(2+): Gln-820, Glu-832, and Asn-834. In terms of domain architecture, MGS-like spans 930 to 1057 (MEVKDHGTVL…ESMTFTMKNM (128 aa)). Residues 930-1057 (MEVKDHGTVL…ESMTFTMKNM (128 aa)) form an allosteric domain region.

This sequence belongs to the CarB family. As to quaternary structure, composed of two chains; the small (or glutamine) chain promotes the hydrolysis of glutamine to ammonia, which is used by the large (or ammonia) chain to synthesize carbamoyl phosphate. Tetramer of heterodimers (alpha,beta)4. It depends on Mg(2+) as a cofactor. The cofactor is Mn(2+).

The catalysed reaction is hydrogencarbonate + L-glutamine + 2 ATP + H2O = carbamoyl phosphate + L-glutamate + 2 ADP + phosphate + 2 H(+). It catalyses the reaction hydrogencarbonate + NH4(+) + 2 ATP = carbamoyl phosphate + 2 ADP + phosphate + 2 H(+). Its pathway is amino-acid biosynthesis; L-arginine biosynthesis; carbamoyl phosphate from bicarbonate: step 1/1. It functions in the pathway pyrimidine metabolism; UMP biosynthesis via de novo pathway; (S)-dihydroorotate from bicarbonate: step 1/3. Functionally, large subunit of the glutamine-dependent carbamoyl phosphate synthetase (CPSase). CPSase catalyzes the formation of carbamoyl phosphate from the ammonia moiety of glutamine, carbonate, and phosphate donated by ATP, constituting the first step of 2 biosynthetic pathways, one leading to arginine and/or urea and the other to pyrimidine nucleotides. The large subunit (synthetase) binds the substrates ammonia (free or transferred from glutamine from the small subunit), hydrogencarbonate and ATP and carries out an ATP-coupled ligase reaction, activating hydrogencarbonate by forming carboxy phosphate which reacts with ammonia to form carbamoyl phosphate. The polypeptide is Carbamoyl phosphate synthase large chain (Staphylococcus saprophyticus subsp. saprophyticus (strain ATCC 15305 / DSM 20229 / NCIMB 8711 / NCTC 7292 / S-41)).